The sequence spans 692 residues: Elongation factor G (692 aa).

The region spanning 8–283 (EDYRNFGIMA…AVVDYLPSPV (276 aa)) is the tr-type G domain. Residues 17-24 (AHIDAGKT), 81-85 (DTPGH), and 135-138 (NKMD) contribute to the GTP site.

Belongs to the TRAFAC class translation factor GTPase superfamily. Classic translation factor GTPase family. EF-G/EF-2 subfamily.

It localises to the cytoplasm. Catalyzes the GTP-dependent ribosomal translocation step during translation elongation. During this step, the ribosome changes from the pre-translocational (PRE) to the post-translocational (POST) state as the newly formed A-site-bound peptidyl-tRNA and P-site-bound deacylated tRNA move to the P and E sites, respectively. Catalyzes the coordinated movement of the two tRNA molecules, the mRNA and conformational changes in the ribosome. This is Elongation factor G from Caulobacter vibrioides (strain ATCC 19089 / CIP 103742 / CB 15) (Caulobacter crescentus).